The primary structure comprises 310 residues: Putative S-adenosyl-L-methionine-dependent methyltransferase MSMEG_1888/MSMEI_1848 (310 aa).

S-adenosyl-L-methionine-binding positions include D128 and 157–158 (DL).

Belongs to the UPF0677 family.

Exhibits S-adenosyl-L-methionine-dependent methyltransferase activity. The protein is Putative S-adenosyl-L-methionine-dependent methyltransferase MSMEG_1888/MSMEI_1848 of Mycolicibacterium smegmatis (strain ATCC 700084 / mc(2)155) (Mycobacterium smegmatis).